We begin with the raw amino-acid sequence, 584 residues long: DNA ligase (584 aa).

ATP is bound at residue Glu-249. The N6-AMP-lysine intermediate role is filled by Lys-251. Arg-256, Arg-271, Glu-301, Phe-341, Arg-416, and Lys-422 together coordinate ATP.

It belongs to the ATP-dependent DNA ligase family. Mg(2+) is required as a cofactor.

It carries out the reaction ATP + (deoxyribonucleotide)n-3'-hydroxyl + 5'-phospho-(deoxyribonucleotide)m = (deoxyribonucleotide)n+m + AMP + diphosphate.. DNA ligase that seals nicks in double-stranded DNA during DNA replication, DNA recombination and DNA repair. The protein is DNA ligase of Pyrobaculum islandicum (strain DSM 4184 / JCM 9189 / GEO3).